The following is a 167-amino-acid chain: Caltractin (167 aa).

A compositionally biased stretch (basic residues) spans 1 to 18; it reads MSSARTVRKDKPRGRHHG. The interval 1–23 is disordered; the sequence is MSSARTVRKDKPRGRHHGLTQQK. EF-hand domains are found at residues 22-57, 58-93, 95-130, and 131-166; these read QKRQ…LGFE, MTEE…KIGE, DTKE…LGEN, and FTVK…TSYA. 19 residues coordinate Ca(2+): Asp-35, Asp-37, Ser-39, Thr-41, Glu-46, Asp-71, Asp-73, Ser-75, Glu-82, Asp-108, Asp-110, Asn-112, Lys-114, Asp-119, Asp-144, Asp-146, Asp-148, Glu-150, and Glu-155.

Belongs to the centrin family.

It localises to the cytoplasm. The protein resides in the cytoskeleton. The protein localises to the microtubule organizing center. Functionally, plays a fundamental role in microtubule-organizing center structure and function. This Atriplex nummularia (Old man saltbush) protein is Caltractin.